Reading from the N-terminus, the 149-residue chain is MAKKITGYVKLQVPAGSANPAPPIGPALGQRGLNIMEFCKAFNAQTAQLEKGMPIPVVITAYQDRSFTFELKTPPVSYFLKKAAGLETKKKPGSGSKTPGKGTFVGKVTRAQLSEIAEKKMKDLNCETVEAAVQMIEGSARSMGLQVQG.

The protein belongs to the universal ribosomal protein uL11 family. In terms of assembly, part of the ribosomal stalk of the 50S ribosomal subunit. Interacts with L10 and the large rRNA to form the base of the stalk. L10 forms an elongated spine to which L12 dimers bind in a sequential fashion forming a multimeric L10(L12)X complex. One or more lysine residues are methylated.

Forms part of the ribosomal stalk which helps the ribosome interact with GTP-bound translation factors. This is Large ribosomal subunit protein uL11 from Xanthobacter autotrophicus (strain ATCC BAA-1158 / Py2).